We begin with the raw amino-acid sequence, 150 residues long: Flagellar assembly factor FliW (150 aa).

The protein belongs to the FliW family. Interacts with translational regulator CsrA and flagellin(s).

Its subcellular location is the cytoplasm. Its function is as follows. Acts as an anti-CsrA protein, binds CsrA and prevents it from repressing translation of its target genes, one of which is flagellin. Binds to flagellin and participates in the assembly of the flagellum. This is Flagellar assembly factor FliW from Leptospira borgpetersenii serovar Hardjo-bovis (strain L550).